The following is an 895-amino-acid chain: Stonin-2 (895 aa).

Disordered stretches follow at residues 10-101 (THQS…AISN), 144-204 (ASES…METI), and 236-279 (NEVG…PKST). Over residues 64–73 (SHSEQDDSSE) the composition is skewed to basic and acidic residues. Polar residues-rich tracts occupy residues 145–169 (SESS…TDLQ) and 179–193 (GRAS…SSSL). 3 positions are modified to phosphoserine: S278, S284, and S299. Disordered stretches follow at residues 291 to 326 (ISSL…SPIN) and 386 to 424 (QIDD…PRDG). Short sequence motifs (NPF) lie at residues 310–312 (NPF) and 326–328 (NPF). The segment covering 311 to 323 (PFLNESLQDIQPS) has biased composition (polar residues). Residues 424 to 557 (GWPMMLRIPE…DLPVQSMDLS (134 aa)) form the SHD domain. In terms of domain architecture, MHD spans 565 to 872 (EEEITVDIRD…AHYSYKVEIE (308 aa)). S759 carries the post-translational modification Phosphoserine.

It belongs to the Stoned B family. Interacts with the second C2 domain of synaptotagmins SYT1 and SYT2. Interacts with EPS15, EPS15R and ITSN1. Interacts indirectly with the AP-2 adapter complex. Interacts with TOR1A and COPS4; the interaction controls STON2 protein stability. Post-translationally, phosphorylated in vitro by PKD. In terms of processing, neddylated and ubiquitinated; leading to its degradation and inhibited by TOR1A and COPS4.

It is found in the synapse. Its subcellular location is the synaptosome. The protein resides in the cytoplasm. It localises to the membrane. Adapter protein involved in endocytic machinery. Involved in the synaptic vesicle recycling. May facilitate clathrin-coated vesicle uncoating. The polypeptide is Stonin-2 (Ston2) (Rattus norvegicus (Rat)).